Here is a 702-residue protein sequence, read N- to C-terminus: Ribosomal RNA large subunit methyltransferase K/L (702 aa).

A THUMP domain is found at 43–154; the sequence is LIYQSLMWSR…KETASIALDL (112 aa).

This sequence belongs to the methyltransferase superfamily. RlmKL family.

It localises to the cytoplasm. The enzyme catalyses guanosine(2445) in 23S rRNA + S-adenosyl-L-methionine = N(2)-methylguanosine(2445) in 23S rRNA + S-adenosyl-L-homocysteine + H(+). It carries out the reaction guanosine(2069) in 23S rRNA + S-adenosyl-L-methionine = N(2)-methylguanosine(2069) in 23S rRNA + S-adenosyl-L-homocysteine + H(+). Specifically methylates the guanine in position 2445 (m2G2445) and the guanine in position 2069 (m7G2069) of 23S rRNA. This is Ribosomal RNA large subunit methyltransferase K/L from Salmonella agona (strain SL483).